A 502-amino-acid chain; its full sequence is Mannitol 2-dehydrogenase (502 aa).

An NAD(+)-binding site is contributed by 37 to 48 (IVHIGVGGFHRA).

The protein belongs to the mannitol dehydrogenase family. As to quaternary structure, monomer.

It carries out the reaction D-mannitol + NAD(+) = D-fructose + NADH + H(+). Functionally, catalyzes the NAD(H)-dependent interconversion of D-fructose and D-mannitol in the mannitol metabolic pathway. The polypeptide is Mannitol 2-dehydrogenase (Emericella nidulans (strain FGSC A4 / ATCC 38163 / CBS 112.46 / NRRL 194 / M139) (Aspergillus nidulans)).